Here is a 313-residue protein sequence, read N- to C-terminus: Protein FixB (313 aa).

An FAD-binding site is contributed by 255–283 (LYLAVGISGQIQHMVGANASQTIFAINKD).

It belongs to the ETF alpha-subunit/FixB family. As to quaternary structure, heterodimer of FixA and FixB.

It participates in amine and polyamine metabolism; carnitine metabolism. In terms of biological role, required for anaerobic carnitine reduction. May bring reductant to CaiA. The sequence is that of Protein FixB from Escherichia coli (strain 55989 / EAEC).